Reading from the N-terminus, the 441-residue chain is MRNAIATVLLGLAMLLPVGAVQAQDGPLRIEITDGVIEPLPFAVPDFIADTPAAAQYATDIARVIAQDLVGSGLFREIPKVAYISPYTDFDAEVNFTDWKAINAQALIAGAVSLSGDRITVRFRGYDVFAGQELGAGLQLSGTTDGWRRIAHKVADTIYSRLTGEGGYFDSRVVFVSETGPKNDRKKRLAIMDYDGANVQYLTNSDAIVLAPRFSPTGDRVLYTSYESGFPQIHVLDVGRVQRRVLSAGNGSMSFAPRFAPNGQTIVYSQSQGGNTDLFSMDINSGNPQRLTSAPSIETAPSFSPDGSQIVFESDRSGTSQLYVMSASGGEAKRISFGQGRYGTPVWSPRGDYIAFTKQNAGRFHIGVMRTDGSEERLLTASFLDEGPTWSPNGRVIMFTRETQGASGQARLYSVDISGRNLKPVKTPDGASDPSWSPLQN.

The signal sequence occupies residues 1–23; that stretch reads MRNAIATVLLGLAMLLPVGAVQA. The segment at 420–441 is disordered; that stretch reads RNLKPVKTPDGASDPSWSPLQN.

This sequence belongs to the TolB family. The Tol-Pal system is composed of five core proteins: the inner membrane proteins TolA, TolQ and TolR, the periplasmic protein TolB and the outer membrane protein Pal. They form a network linking the inner and outer membranes and the peptidoglycan layer.

Its subcellular location is the periplasm. Part of the Tol-Pal system, which plays a role in outer membrane invagination during cell division and is important for maintaining outer membrane integrity. This Ruegeria sp. (strain TM1040) (Silicibacter sp.) protein is Tol-Pal system protein TolB.